The primary structure comprises 336 residues: Potassium channel subfamily K member 1 (336 aa).

The Cytoplasmic portion of the chain corresponds to 1–20 (MLQSLAGSSCVRLVERHRSA). The chain crosses the membrane as a helical span at residues 21–41 (WCFGFLVLGYLLYLVFGAVVF). At 42-103 (SSVELPYEDL…SNASGNWNWD (62 aa)) the chain is on the extracellular side. Asparagine 95 is a glycosylation site (N-linked (GlcNAc...) asparagine). Residues 104–116 (FTSALFFASTVLS) constitute an intramembrane region (helical). An intramembrane segment occupies 117-122 (TTGYGH). A selectivity filter 1 region spans residues 117-122 (TTGYGH). At 123 to 132 (TVPLSDGGKA) the chain is on the extracellular side. A helical membrane pass occupies residues 133–156 (FCIIYSVIGIPFTLLFLTAVVQRI). Over 157-181 (TVHVTRRPVLYFHIRWGFSKQVVAI) the chain is Cytoplasmic. The chain crosses the membrane as a helical span at residues 182 to 202 (VHAVLLGFVTVSCFFFIPAAV). Over 203-211 (FSVLEDDWN) the chain is Extracellular. An intramembrane region (helical) is located at residues 212–224 (FLESFYFCFISLS). The interval 225-230 (TIGLGD) is selectivity filter 2. Residues 225-231 (TIGLGDY) lie within the membrane without spanning it. Residues 232-243 (VPGEGYNQKFRE) lie on the Extracellular side of the membrane. The chain crosses the membrane as a helical span at residues 244-267 (LYKIGITCYLLLGLIAMLVVLETF). Residues 268–336 (CELHELKKFR…SACVDGPANH (69 aa)) are Cytoplasmic-facing. Lysine 274 is covalently cross-linked (Glycyl lysine isopeptide (Lys-Gly) (interchain with G-Cter in SUMO)). Positions 293 to 299 (IIEHDQL) are important for intracellular retention in recycling endosomes. At serine 326 the chain carries Phosphoserine.

It belongs to the two pore domain potassium channel (TC 1.A.1.8) family. Homodimer; disulfide-linked. Heterodimer with KCNK2; disulfide-linked. In astrocytes, forms mostly heterodimeric potassium channels with KCNK2, with only a minor proportion of functional channels containing homodimeric KCNK1. Interacts with KCNK3 and KCNK9, forming functional heterodimeric channels. Interacts with GNG4. Identified in a complex with PSD and ARF6; interacts only with PSD that is bound to ARF6. Interacts with UBE2I. Sumoylation is controversial. Sumoylated by UBE2I. Not sumoylated when expressed in xenopus oocytes or mammalian cells. Sumoylation inactivates the channel, but does not interfere with expression at the cell membrane. Sumoylation of a single subunit is sufficient to silence the dimeric channel. Sumoylation of KCNK1 is sufficient to silence heterodimeric channels formed by KCNK1 and KCNK3 or KCNK9. Desumoylated by SENP1; this activates the channel. Desumoylated by SENP1; this strongly increases halothane-mediated activation of heterodimeric channels formed with KCNK9. SENP1 treatment has no effect. In terms of tissue distribution, detected in bronchial epithelial cells. Detected in heart left atrium and left ventricle. Detected in cardiac myocytes (at protein level). Widely expressed with high levels in heart, brain and kidney, and lower levels in colon, ovary, placenta, lung and liver. Highly expressed in cerebellum, and detected at lower levels in amygdala, caudate nucleus, brain cortex, hippocampus, putamen, substantia nigra, thalamus, dorsal root ganglion, spinal cord, pituitary, heart, kidney, lung, placenta, pancreas, stomach, small intestine, uterus and prostate. Detected in right and left heart ventricle and atrium, and in heart Purkinje fibers.

The protein resides in the cell membrane. The protein localises to the recycling endosome. It localises to the synaptic cell membrane. Its subcellular location is the cytoplasmic vesicle. It is found in the perikaryon. The protein resides in the cell projection. The protein localises to the dendrite. It localises to the apical cell membrane. The enzyme catalyses K(+)(in) = K(+)(out). The catalysed reaction is NH4(+)(in) = NH4(+)(out). It carries out the reaction Na(+)(in) = Na(+)(out). It catalyses the reaction Rb(+)(in) = Rb(+)(out). The enzyme catalyses Cs(+)(in) = Cs(+)(out). The catalysed reaction is Li(+)(in) = Li(+)(out). It carries out the reaction L-glutamate(out) = L-glutamate(in). It catalyses the reaction chloride(in) = chloride(out). Its activity is regulated as follows. Inhibited by Ba(2+) ions and quinidine. Inhibited by quinine. Is slightly inhibited by 10 mM tetraethylammonium (TEA), and only marginally inhibited by 4-aminopyridine, charybdotoxin and dendrotoxin. Lowering the extracellular pH to below 6.5 transiently activates the channel, and then inhibits channel activity. Inhibited when the intracellular pH is decreased down to pH 6.0, but this may be due to indirect effects. Its function is as follows. Ion channel that contributes to passive transmembrane potassium transport and to the regulation of the resting membrane potential in brain astrocytes, but also in kidney and in other tissues. Forms dimeric channels through which potassium ions pass in accordance with their electrochemical gradient. The channel is selective for K(+) ions at physiological potassium concentrations and at neutral pH, but becomes permeable to Na(+) at subphysiological K(+) levels and upon acidification of the extracellular medium. The homodimer has very low potassium channel activity, when expressed in heterologous systems, and can function as weakly inward rectifying potassium channel. Channel activity is modulated by activation of serotonin receptors. Heterodimeric channels containing KCNK1 and KCNK2 have much higher activity, and may represent the predominant form in astrocytes. Heterodimeric channels containing KCNK1 and KCNK3 or KCNK9 have much higher activity. Heterodimeric channels formed by KCNK1 and KCNK9 may contribute to halothane-sensitive currents. Mediates outward rectifying potassium currents in dentate gyrus granule cells and contributes to the regulation of their resting membrane potential. Contributes to the regulation of action potential firing in dentate gyrus granule cells and down-regulates their intrinsic excitability. In astrocytes, the heterodimer formed by KCNK1 and KCNK2 is required for rapid glutamate release in response to activation of G-protein coupled receptors, such as F2R and CNR1. Required for normal ion and water transport in the kidney. Contributes to the regulation of the resting membrane potential of pancreatic beta cells. The low channel activity of homodimeric KCNK1 may be due to sumoylation. The low channel activity may be due to rapid internalization from the cell membrane and retention in recycling endosomes. Permeable to monovalent cations with ion selectivity for K(+) &gt; Rb(+) &gt;&gt; NH4(+) &gt;&gt; Cs(+) = Na(+) = Li(+). This Homo sapiens (Human) protein is Potassium channel subfamily K member 1 (KCNK1).